We begin with the raw amino-acid sequence, 300 residues long: Probable acetyltransferase Rv3034c (300 aa).

Residues 1-25 form the signal peptide; sequence MNVLSLGSSSGVVWGRVPITAPAGA.

The protein belongs to the transferase hexapeptide repeat family.

In terms of biological role, may be involved in the biosynthesis of 6-O-methylglucosyl-containing lipopolysaccharides (MGLP). Regulates host peroxisome homeostasis in response to intracellular redox levels to favor mycobacterial infection in macrophage. Induces the expression of host peroxisome biogenesis and proliferation factors as well as peroxisome associated enzymes. Inhibits the induction of host pexophagy mechanism by down-regulating the expression of pexophagy associated proteins and adapter molecules in infected macrophages. However, during increased oxidative stress conditions, it induces degradation of dysfunctional and damaged peroxisomes. Regulation of peroxisome biogenesis and degradation is dependent upon host p-mTORC1 mediated signaling pathway. The chain is Probable acetyltransferase Rv3034c from Mycobacterium tuberculosis (strain ATCC 25618 / H37Rv).